The chain runs to 102 residues: Matrix Gla protein (102 aa).

Ser-2, Ser-3, and Ser-5 each carry phosphoserine. Residues 18 to 45 (DANSFMRQPRPPNHWDSRDRFKSPRERT) are disordered. Residues 27-73 (RPPNHWDSRDRFKSPRERTREKCEEYRPCERLARQVGLKRAYGKYFG) enclose the Gla domain. The segment covering 30 to 45 (NHWDSRDRFKSPRERT) has biased composition (basic and acidic residues). A 4-carboxyglutamate mark is found at Glu-43, Glu-47, Glu-50, and Glu-51. Cys-49 and Cys-55 are disulfide-bonded. The interval 72–102 (FGNRRQRPSTSGRLRPRKYRASRYRNHHYRY) is disordered. Basic residues predominate over residues 85–102 (LRPRKYRASRYRNHHYRY).

It belongs to the osteocalcin/matrix Gla protein family. Requires vitamin K-dependent gamma-carboxylation for its function. Accounts for 35-40% of the total protein in the acid demineralization extract of calcified cartilage.

The protein resides in the secreted. Associates with the organic matrix of calcified cartilage. This Galeorhinus galeus (Tope shark) protein is Matrix Gla protein (mgp).